Reading from the N-terminus, the 287-residue chain is Isopentenyl-diphosphate Delta-isomerase I (287 aa).

Residues 105–257 (LLHRAFSVFL…GVKLSPWFRL (153 aa)) form the Nudix hydrolase domain. Residues Cys142 and Tyr207 contribute to the active site.

Belongs to the IPP isomerase type 1 family.

It catalyses the reaction isopentenyl diphosphate = dimethylallyl diphosphate. The protein operates within isoprenoid biosynthesis; dimethylallyl diphosphate biosynthesis; dimethylallyl diphosphate from isopentenyl diphosphate: step 1/1. It functions in the pathway porphyrin-containing compound metabolism; chlorophyll biosynthesis. Its function is as follows. Catalyzes the 1,3-allylic rearrangement of the homoallylic substrate isopentenyl (IPP) to its highly electrophilic allylic isomer, dimethylallyl diphosphate (DMAPP). This chain is Isopentenyl-diphosphate Delta-isomerase I (IPI1), found in Clarkia breweri (Fairy fans).